An 88-amino-acid chain; its full sequence is Putative regulatory protein AM1_5498 (88 aa).

It belongs to the RemA family.

The protein is Putative regulatory protein AM1_5498 of Acaryochloris marina (strain MBIC 11017).